The primary structure comprises 514 residues: MKEELVIFDTTLRDGEQSPGASMTKEEKVRIAKQLEKLRVNVIEAGFPAASQGDFESVQAVASAVKDSTVCGLARAVENDIVRAGEAIKLANSGRIHTFIATSPIHMEKKLKMSPDEVVERAVWAVKRARDFTDNVEFSPEDAGRSELDFLCRVIEAAIDAGATTINIPDTVGYNVPEQFGELFHQLLNRIPNADKAIFSAHCHNDLGLAVANSLAAVKSGARQVECTINGLGERAGNTALEEVVMAVRTRQDWFDVDTRIHTPEILAASRLVAGITGFAVQPNKAIVGTNAFSHESGIHQDGVLKHRETYEIMRAEDVGWSTNKMVLGKHSGRSAFRSRLKELGIEFETEQELSDAFISFKELADRKHEIYDEDIQALVTDNNTRRVENETFRLVALKVGTQTGDAPTATITLWIDGEEKTASSEGGGVVDATFKAIEKLVDSGATLELYSVSNVTNGTDSLGETTVRMEKAGRIVNGQGADTDIVTASAKAYINALNKLIDTGSKEHPQAHV.

Positions 5-267 (LVIFDTTLRD…DTRIHTPEIL (263 aa)) constitute a Pyruvate carboxyltransferase domain. Mn(2+)-binding residues include aspartate 14, histidine 202, histidine 204, and asparagine 238. Residues 394 to 514 (RLVALKVGTQ…GSKEHPQAHV (121 aa)) form a regulatory domain region.

The protein belongs to the alpha-IPM synthase/homocitrate synthase family. LeuA type 1 subfamily. Homodimer. Requires Mn(2+) as cofactor.

It is found in the cytoplasm. It catalyses the reaction 3-methyl-2-oxobutanoate + acetyl-CoA + H2O = (2S)-2-isopropylmalate + CoA + H(+). The protein operates within amino-acid biosynthesis; L-leucine biosynthesis; L-leucine from 3-methyl-2-oxobutanoate: step 1/4. Its function is as follows. Catalyzes the condensation of the acetyl group of acetyl-CoA with 3-methyl-2-oxobutanoate (2-ketoisovalerate) to form 3-carboxy-3-hydroxy-4-methylpentanoate (2-isopropylmalate). This chain is 2-isopropylmalate synthase, found in Hydrogenovibrio crunogenus (strain DSM 25203 / XCL-2) (Thiomicrospira crunogena).